A 307-amino-acid polypeptide reads, in one-letter code: Ribonuclease Z (307 aa).

His61, His63, Asp65, His66, His138, Asp208, and His264 together coordinate Zn(2+). Asp65 serves as the catalytic Proton acceptor.

It belongs to the RNase Z family. In terms of assembly, homodimer. Zn(2+) serves as cofactor.

It carries out the reaction Endonucleolytic cleavage of RNA, removing extra 3' nucleotides from tRNA precursor, generating 3' termini of tRNAs. A 3'-hydroxy group is left at the tRNA terminus and a 5'-phosphoryl group is left at the trailer molecule.. Functionally, zinc phosphodiesterase, which displays some tRNA 3'-processing endonuclease activity. Probably involved in tRNA maturation, by removing a 3'-trailer from precursor tRNA. In Pyrococcus abyssi (strain GE5 / Orsay), this protein is Ribonuclease Z.